Here is a 667-residue protein sequence, read N- to C-terminus: Fermitin family homolog 3 (667 aa).

Phosphoserine is present on Ser8. A Phosphotyrosine modification is found at Tyr11. The 330-residue stretch at 229-558 folds into the FERM domain; the sequence is WLDSSRCLMQ…SLPDFGISYV (330 aa). Residues 354 to 457 enclose the PH domain; the sequence is DHLRIFRIPR…WMAGCRLASK (104 aa). Residue Tyr504 is modified to Phosphotyrosine. A Phosphothreonine modification is found at Thr591.

Belongs to the kindlin family. Interacts with ITGB1, ITGB2 and ITGB3 (via cytoplasmic tails). In terms of tissue distribution, highly expressed in lymph node. Expressed in thymus, spleen and leukocytes. Weakly expressed in placenta, small intestine, stomach, testis and lung. Overexpressed in B-cell malignancies.

Its subcellular location is the cell projection. It is found in the podosome. In terms of biological role, plays a central role in cell adhesion in hematopoietic cells. Acts by activating the integrin beta-1-3 (ITGB1, ITGB2 and ITGB3). Required for integrin-mediated platelet adhesion and leukocyte adhesion to endothelial cells. Required for activation of integrin beta-2 (ITGB2) in polymorphonuclear granulocytes (PMNs). Its function is as follows. Isoform 2 may act as a repressor of NF-kappa-B and apoptosis. This is Fermitin family homolog 3 (FERMT3) from Homo sapiens (Human).